The following is a 435-amino-acid chain: Actin-like protein 7A (435 aa).

A disordered region spans residues 1 to 64 (MWAPPAAIMG…TESKAAKERP (64 aa)). Over residues 20–31 (QAPLQTQALQTA) the composition is skewed to low complexity. Residues 31–51 (ASLRDGPAKRAVWVRHTSSEP) form a required for interaction with TES region. The segment covering 55-64 (TESKAAKERP) has biased composition (basic and acidic residues).

The protein belongs to the actin family. Interacts (via N-terminus) with TES (via LIM domain 2). Heterodimer with TES; the heterodimer interacts with ENAH to form a heterotrimer. Interacts with ACTL9. Interacts with CYLC1; the interaction may be relevant for proper acrosome attachment to the nuclear envelope. In terms of tissue distribution, strongly expressed in testis. Also expressed in other tissues.

It localises to the cytoplasm. The protein resides in the cytoskeleton. It is found in the golgi apparatus. Its subcellular location is the nucleus. The protein localises to the cytoplasmic vesicle. It localises to the secretory vesicle. The protein resides in the acrosome. Functionally, essential for normal spermatogenesis and male fertility. Required for normal sperm head morphology, acroplaxome formation, acrosome attachment, and acrosome granule stability. May anchor and stabilize acrosomal adherence to the acroplaxome at least in part by facilitating the presence of F-actin in the subacrosomal space. May play an important role in formation and fusion of Golgi-derived vesicles during acrosome biogenesis. The polypeptide is Actin-like protein 7A (ACTL7A) (Homo sapiens (Human)).